A 292-amino-acid polypeptide reads, in one-letter code: Phosphoenolpyruvate guanylyltransferase (292 aa).

3 residues coordinate phosphoenolpyruvate: T168, G184, and S187. Positions P243–P292 are disordered.

This sequence belongs to the CofC family.

It carries out the reaction phosphoenolpyruvate + GTP + H(+) = enolpyruvoyl-2-diphospho-5'-guanosine + diphosphate. It participates in cofactor biosynthesis; coenzyme F420 biosynthesis. Guanylyltransferase that catalyzes the activation of phosphoenolpyruvate (PEP) as enolpyruvoyl-2-diphospho-5'-guanosine, via the condensation of PEP with GTP. It is involved in the biosynthesis of coenzyme F420, a hydride carrier cofactor. In Frankia casuarinae (strain DSM 45818 / CECT 9043 / HFP020203 / CcI3), this protein is Phosphoenolpyruvate guanylyltransferase.